We begin with the raw amino-acid sequence, 69 residues long: MKPGIHPTYYHDAVVKCACGNTFITGSTKKEIRVEICSKCHPFFTGQQKIVDTGGRVERFRKRFNLEEK.

Zn(2+) contacts are provided by C17, C19, C37, and C40.

It belongs to the bacterial ribosomal protein bL31 family. Type A subfamily. In terms of assembly, part of the 50S ribosomal subunit. Zn(2+) serves as cofactor.

In terms of biological role, binds the 23S rRNA. This chain is Large ribosomal subunit protein bL31, found in Caldanaerobacter subterraneus subsp. tengcongensis (strain DSM 15242 / JCM 11007 / NBRC 100824 / MB4) (Thermoanaerobacter tengcongensis).